A 218-amino-acid chain; its full sequence is Protein-methionine-sulfoxide reductase heme-binding subunit MsrQ (218 aa).

The next 5 membrane-spanning stretches (helical) occupy residues 8–28 (VIVA…LLGW), 60–80 (FLLI…AVLI), 86–106 (LGLY…TLDL), 121–141 (PYIT…ITST), and 155–175 (VHML…WLVK).

Belongs to the MsrQ family. In terms of assembly, heterodimer of a catalytic subunit (MsrP) and a heme-binding subunit (MsrQ). The cofactor is FMN. Heme b is required as a cofactor.

The protein resides in the cell inner membrane. Part of the MsrPQ system that repairs oxidized periplasmic proteins containing methionine sulfoxide residues (Met-O), using respiratory chain electrons. Thus protects these proteins from oxidative-stress damage caused by reactive species of oxygen and chlorine generated by the host defense mechanisms. MsrPQ is essential for the maintenance of envelope integrity under bleach stress, rescuing a wide series of structurally unrelated periplasmic proteins from methionine oxidation. MsrQ provides electrons for reduction to the reductase catalytic subunit MsrP, using the quinone pool of the respiratory chain. This chain is Protein-methionine-sulfoxide reductase heme-binding subunit MsrQ, found in Xanthomonas oryzae pv. oryzae (strain MAFF 311018).